We begin with the raw amino-acid sequence, 168 residues long: ATP synthase F(1) complex subunit delta, mitochondrial (168 aa).

The transit peptide at 1–22 directs the protein to the mitochondrion; that stretch reads MLPAALLRHPGLRRLVLQARTY. N6-acetyllysine; alternate occurs at positions 136 and 165. Residues lysine 136 and lysine 165 each carry the N6-succinyllysine; alternate modification.

This sequence belongs to the ATPase epsilon chain family. Component of the ATP synthase complex composed at least of ATP5F1A/subunit alpha, ATP5F1B/subunit beta, ATP5MC1/subunit c (homooctomer), MT-ATP6/subunit a, MT-ATP8/subunit 8, ATP5ME/subunit e, ATP5MF/subunit f, ATP5MG/subunit g, ATP5MK/subunit k, ATP5MJ/subunit j, ATP5F1C/subunit gamma, ATP5F1D/subunit delta, ATP5F1E/subunit epsilon, ATP5PF/subunit F6, ATP5PB/subunit b, ATP5PD/subunit d, ATP5PO/subunit OSCP. ATP synthase complex consists of a soluble F(1) head domain (subunits alpha(3) and beta(3)) - the catalytic core - and a membrane F(0) domain - the membrane proton channel (subunits c, a, 8, e, f, g, k and j). These two domains are linked by a central stalk (subunits gamma, delta, and epsilon) rotating inside the F1 region and a stationary peripheral stalk (subunits F6, b, d, and OSCP). Component of a complex composed at least by ATPIF1, ATP5F1A, ATP5F1B, ATP5F1C AND ATP5F1E.

The protein localises to the mitochondrion. The protein resides in the mitochondrion inner membrane. In terms of biological role, subunit delta, of the mitochondrial membrane ATP synthase complex (F(1)F(0) ATP synthase or Complex V) that produces ATP from ADP in the presence of a proton gradient across the membrane which is generated by electron transport complexes of the respiratory chain. ATP synthase complex consist of a soluble F(1) head domain - the catalytic core - and a membrane F(1) domain - the membrane proton channel. These two domains are linked by a central stalk rotating inside the F(1) region and a stationary peripheral stalk. During catalysis, ATP synthesis in the catalytic domain of F(1) is coupled via a rotary mechanism of the central stalk subunits to proton translocation. In vivo, can only synthesize ATP although its ATP hydrolase activity can be activated artificially in vitro. With the central stalk subunit gamma, is essential for the biogenesis of F(1) catalytic part of the ATP synthase complex namely in the formation of F1 assembly intermediate. The protein is ATP synthase F(1) complex subunit delta, mitochondrial of Rattus norvegicus (Rat).